A 145-amino-acid polypeptide reads, in one-letter code: Basic phospholipase A2 beta-bungarotoxin A2 chain (145 aa).

Positions 1–17 (MLIFLWCGAVCVSLLGA) are cleaved as a signal peptide. A propeptide spanning residues 18–25 (ANIPPHPL) is cleaved from the precursor. 6 disulfides stabilise this stretch: Cys-52-Cys-144, Cys-54-Cys-70, Cys-69-Cys-125, Cys-76-Cys-118, Cys-86-Cys-111, and Cys-104-Cys-116. Positions 53, 55, and 57 each coordinate Ca(2+). His-73 is an active-site residue. Asp-74 is a Ca(2+) binding site. Residue Asp-119 is part of the active site.

Belongs to the phospholipase A2 family. Group I subfamily. D49 sub-subfamily. Heterodimer; disulfide-linked. The A chains have phospholipase A2 activity and the B chains show homology with the basic protease inhibitors. The A2 chain is found in beta-3 and beta-4 bungarotoxins. Requires Ca(2+) as cofactor. Expressed by the venom gland.

It is found in the secreted. The catalysed reaction is a 1,2-diacyl-sn-glycero-3-phosphocholine + H2O = a 1-acyl-sn-glycero-3-phosphocholine + a fatty acid + H(+). Its function is as follows. Snake venom phospholipase A2 (PLA2) that inhibits neuromuscular transmission by blocking acetylcholine release from the nerve termini. PLA2 catalyzes the calcium-dependent hydrolysis of the 2-acyl groups in 3-sn-phosphoglycerides. In Bungarus multicinctus (Many-banded krait), this protein is Basic phospholipase A2 beta-bungarotoxin A2 chain.